A 172-amino-acid polypeptide reads, in one-letter code: Cell division protein SepF (172 aa).

The segment at 18 to 73 (RRYDEEDLPDEELTTEVYSDDGYEPSSEVTQLHHHDSNEQHARGHKAVQHRRRSEL) is disordered. A compositionally biased stretch (acidic residues) spans 22–40 (EEDLPDEELTTEVYSDDGY). Positions 48–59 (QLHHHDSNEQHA) are enriched in basic and acidic residues. Residues 60 to 70 (RGHKAVQHRRR) show a composition bias toward basic residues.

It belongs to the SepF family. As to quaternary structure, homodimer. Interacts with FtsZ.

The protein localises to the cytoplasm. Its function is as follows. Cell division protein that is part of the divisome complex and is recruited early to the Z-ring. Probably stimulates Z-ring formation, perhaps through the cross-linking of FtsZ protofilaments. Its function overlaps with FtsA. This chain is Cell division protein SepF, found in Cutibacterium acnes (strain DSM 16379 / KPA171202) (Propionibacterium acnes).